The chain runs to 348 residues: Protein pelota homolog (348 aa).

It belongs to the eukaryotic release factor 1 family. Pelota subfamily. As to quaternary structure, monomer. A divalent metal cation serves as cofactor.

Its subcellular location is the cytoplasm. In terms of biological role, may function in recognizing stalled ribosomes, interact with stem-loop structures in stalled mRNA molecules, and effect endonucleolytic cleavage of the mRNA. May play a role in the release non-functional ribosomes and degradation of damaged mRNAs. Has endoribonuclease activity. The polypeptide is Protein pelota homolog (Methanococcus maripaludis (strain DSM 14266 / JCM 13030 / NBRC 101832 / S2 / LL)).